Here is a 9159-residue protein sequence, read N- to C-terminus: Halomucin (9159 aa).

A signal peptide spans 1–30; the sequence is MSQTAKPIFAVVVALIVLISGVAFIGSVSA. C-type lectin domains are found at residues 644–776 and 929–1060; these read TTGN…YLVE and YDGH…VEYG. The span at 1310–1332 shows a compositional bias: polar residues; it reads QPQTVNDPDAVSTRNNNVGSNGL. Residues 1310–1351 form a disordered region; it reads QPQTVNDPDAVSTRNNNVGSNGLDSKIEDDQNNGADGNPHGT. Residues 1756 to 3380 are V-G-G-L motif-rich region; sequence VGGLIGESSG…GFNGEHVGGL (1625 aa). 8 disordered regions span residues 3484-3514, 4878-4912, 6570-6589, 7047-7097, 7660-7702, 7888-7923, 8212-8237, and 8369-8614; these read GATA…PAPQ, ESYW…TTPA, TDSA…SSGQ, TPTV…GINT, ATDS…NPGG, IDGD…EPAL, STQQ…GAAD, and DSTA…GSST. Gly residues predominate over residues 3495 to 3505; that stretch reads GTPGGATGYGS. Residues 4880-4890 are compositionally biased toward basic and acidic residues; the sequence is YWDKGATDKSD. Composition is skewed to polar residues over residues 7048-7057 and 7068-7078; these read PTVTINSSSD and GEDSTSSNESS. Residues 7079–7092 show a composition bias toward acidic residues; sequence DGTESDQGDPEDDI. The segment covering 7681-7698 has biased composition (polar residues); that stretch reads VTGSTPTFVSSGTVTTPE. A Cadherin domain is found at 7686 to 7793; that stretch reads PTFVSSGTVT…ITDVDEQPTG (108 aa). Acidic residues-rich tracts occupy residues 7888–7898 and 7905–7920; these read IDGDGLADDNE and DNDD…EDQE. The span at 8378-8390 shows a compositional bias: acidic residues; it reads ALEDDSSNQDSGD. Low complexity-rich tracts occupy residues 8391–8529 and 8538–8548; these read DSSN…SSQN and SAAAVGAESGS. Composition is skewed to gly residues over residues 8549–8566 and 8574–8608; these read EMGG…GDGS and AGGG…GSSS.

Post-translationally, probably glycosylated with sugar containing sialic acid. This may further contribute to its overall negative charge, thereby creating an aqueous shield covering the cells.

The protein resides in the secreted. Functionally, may protect the organism from desiccation stress. May also contribute to the rigidity and maintenance of the unique square cell morphology of H.walsbyi. This chain is Halomucin (hmu), found in Haloquadratum walsbyi (strain DSM 16790 / HBSQ001).